We begin with the raw amino-acid sequence, 571 residues long: Proline--tRNA ligase (571 aa).

Belongs to the class-II aminoacyl-tRNA synthetase family. ProS type 1 subfamily. As to quaternary structure, homodimer.

It localises to the cytoplasm. The catalysed reaction is tRNA(Pro) + L-proline + ATP = L-prolyl-tRNA(Pro) + AMP + diphosphate. In terms of biological role, catalyzes the attachment of proline to tRNA(Pro) in a two-step reaction: proline is first activated by ATP to form Pro-AMP and then transferred to the acceptor end of tRNA(Pro). As ProRS can inadvertently accommodate and process non-cognate amino acids such as alanine and cysteine, to avoid such errors it has two additional distinct editing activities against alanine. One activity is designated as 'pretransfer' editing and involves the tRNA(Pro)-independent hydrolysis of activated Ala-AMP. The other activity is designated 'posttransfer' editing and involves deacylation of mischarged Ala-tRNA(Pro). The misacylated Cys-tRNA(Pro) is not edited by ProRS. The sequence is that of Proline--tRNA ligase from Ligilactobacillus salivarius (strain UCC118) (Lactobacillus salivarius).